A 440-amino-acid chain; its full sequence is Trigger factor (440 aa).

In terms of domain architecture, PPIase FKBP-type spans 163–248 (GDTVNIDFDG…INEIKYKNVP (86 aa)).

Belongs to the FKBP-type PPIase family. Tig subfamily.

Its subcellular location is the cytoplasm. The enzyme catalyses [protein]-peptidylproline (omega=180) = [protein]-peptidylproline (omega=0). In terms of biological role, involved in protein export. Acts as a chaperone by maintaining the newly synthesized protein in an open conformation. Functions as a peptidyl-prolyl cis-trans isomerase. This chain is Trigger factor, found in Staphylococcus carnosus (strain TM300).